A 313-amino-acid polypeptide reads, in one-letter code: Ribosomal RNA small subunit methyltransferase I (313 aa).

The tract at residues Met-1–Arg-23 is disordered.

The protein belongs to the methyltransferase superfamily. RsmI family.

The protein localises to the cytoplasm. It catalyses the reaction cytidine(1402) in 16S rRNA + S-adenosyl-L-methionine = 2'-O-methylcytidine(1402) in 16S rRNA + S-adenosyl-L-homocysteine + H(+). In terms of biological role, catalyzes the 2'-O-methylation of the ribose of cytidine 1402 (C1402) in 16S rRNA. This chain is Ribosomal RNA small subunit methyltransferase I, found in Micromonospora olivasterospora.